A 1349-amino-acid polypeptide reads, in one-letter code: Adhesion G protein-coupled receptor F5 (1349 aa).

The signal sequence occupies residues 1–24; that stretch reads MKSSRTVTLYFVLIVICSSEATWS. At 25–1016 the chain is on the extracellular side; sequence RPAEPIVHPL…PGSLLKILLD (992 aa). N-linked (GlcNAc...) asparagine glycosylation is found at N73, N94, N185, N254, N270, N286, N299, N326, N337, N349, N396, N470, N503, N538, N649, and N666. Positions 163–271 constitute an SEA domain; the sequence is PETYITLKIK…NSFQGTPSNE (109 aa). 3 consecutive Ig-like domains span residues 268 to 366, 367 to 464, and 469 to 559; these read PSNE…LDVT, PIRI…IAVT, and ANLT…KDVT. Cysteines 291 and 348 form a disulfide. C389 and C447 are oxidised to a cystine. Residues C490 and C543 are joined by a disulfide bond. S819 is modified (phosphoserine). 3 N-linked (GlcNAc...) asparagine glycosylation sites follow: N820, N958, and N963. Positions 842–1006 constitute a GAIN-B domain; it reads TPPFLFHPNV…SILMSPDSPD (165 aa). 2 cysteine pairs are disulfide-bonded: C954/C988 and C973/C990. Residues 954–1006 form a GPS region; it reads CVFWNFSLANNTGGWDSSGCTVEDDGRDNRDRVFCKCNHLTSFSILMSPDSPD. The segment at 994 to 1009 is tethered agonist; that stretch reads TSFSILMSPDSPDPGS. The helical transmembrane segment at 1017-1036 threads the bilayer; sequence IISYIGLGFSIVSLAACLVV. The Cytoplasmic segment spans residues 1037-1055; the sequence is EAMVWKSVTKNRTSYMRHI. The helical transmembrane segment at 1056-1078 threads the bilayer; it reads CIVNIALCLLIADIWFIVAGAIH. Over 1079–1097 the chain is Extracellular; the sequence is DGHYPLNETACVAATFFIH. A glycan (N-linked (GlcNAc...) asparagine) is linked at N1085. Residues 1098–1120 form a helical membrane-spanning segment; the sequence is FFYLSVFFWMLTLGLMLFYRLIF. Topologically, residues 1121–1131 are cytoplasmic; sequence ILHDASKSTQK. Residues 1132 to 1154 form a helical membrane-spanning segment; that stretch reads AIAFSLGYGCPLIISSITVGVTQ. Residues 1155 to 1173 lie on the Extracellular side of the membrane; sequence PQEVYMRKNACWLNWEDTR. The chain crosses the membrane as a helical span at residues 1174 to 1196; it reads ALLAFAIPALIIVVVNVSITVVV. Topologically, residues 1197–1216 are cytoplasmic; sequence ITKILRPSVGDKPGKQEKSS. The chain crosses the membrane as a helical span at residues 1217–1239; that stretch reads LFQISKSIGVLTPLLGLTWGFGL. Residues 1240-1248 are Extracellular-facing; it reads ATVIQGSNA. The chain crosses the membrane as a helical span at residues 1249 to 1271; sequence VFHIIFTLLNAFQGLFILLFGCL. Over 1272–1349 the chain is Cytoplasmic; sequence WDQKVQEALL…NSSSAYSLLN (78 aa). T1303 is modified (phosphothreonine). S1310 bears the Phosphoserine mark. The span at 1329–1343 shows a compositional bias: low complexity; that stretch reads STPETTSSSVENSSS. A disordered region spans residues 1329–1349; the sequence is STPETTSSSVENSSSAYSLLN.

Belongs to the G-protein coupled receptor 2 family. Adhesion G-protein coupled receptor (ADGR) subfamily. As to quaternary structure, homodimer; disulfide-linked. Heterodimer of 2 chains generated by proteolytic processing; the large extracellular N-terminal fragment and the membrane-bound C-terminal fragment predominantly remain associated and non-covalently linked. Fragment generates by the processing enzyme furin remains attached to the extracellular N-terminal fragment. Interacts (via N-terminal extracellular domain) with SFTPD. Post-translationally, highly glycosylated. In terms of processing, proteolytically cleaved at multiple sites: one in the GPS region of the GAIN-B domain (S1 site) and the other in the SEA domain (S2 site). The proteolytic cleavage at S1 site generates an extracellular subunit and a seven-transmembrane subunit. The proteolytic cleavage at S2 site generates a fragment that undergoes proteolytic cleavage by the processing enzyme furin. Highly expressed in the lung and to a much lesser extent in the kidney and heart. Dense localization in alveolar walls of the lung and in the intercalated cells of the collecting duct of the kidney.

It localises to the cell membrane. Its activity is regulated as follows. As an adhesion G protein-coupled receptor (aGPCR) exhibits a large N-terminal extracellular domain containing highly conserved GPCR autoproteolysis-inducing (GAIN) domain. During synthesis, intracellular autoproteolytic processing of nascent chain within the GAIN domain generates a mature protein, consisting of an N-terminal fragment that is non-covalently linked to the C-terminal fragment. The mature protein is routed to the plasma membrane where the N- and C-terminal fragments remain associated, forming the holoreceptor. Dissociation of the aGPCR fragments stimulates G protein signaling through the action of the tethered-peptide agonist stalk that is occluded within the GAIN domain in the holoreceptor form. This dissociation might be induced by ligand binding, such as that of sFNDC4. Functionally, receptor that plays a critical role in lung surfactant homeostasis. May play a role in controlling adipocyte function. Its function is as follows. Adhesion G protein-coupled receptor. In alveolar type II (ATII or AT2) cells, required for normal lung surfactant homeostasis. Modulation of both surfactant secretion and uptake by ATII cells is mediated by the downstream activation of GNAQ/GNA11 proteins and may be a consequence of increased cortical F-actin assembly induced by ADGRF5 activation. In the kidney, may play a role in the regulation of acid excretion into the primary urine, possibly by regulating the surface expression of V-ATPase proton pump. As a receptor for soluble FNDC4 (sFNDC4), required for proper systemic glucose tolerance, specifically sensitizing white adipose tissue to insulin. Also plays a role in sFNDC4-induced decrease of local inflammation in white adipose tissue. This is Adhesion G protein-coupled receptor F5 (Adgrf5) from Rattus norvegicus (Rat).